Reading from the N-terminus, the 199-residue chain is Thymidine kinase (199 aa).

Residues 15-22 (GSMFSGKS) and 88-91 (DEVQ) each bind ATP. Glu89 acts as the Proton acceptor in catalysis. Zn(2+) contacts are provided by Cys145, Cys148, Cys183, and His186.

The protein belongs to the thymidine kinase family. Homotetramer.

The protein localises to the cytoplasm. It carries out the reaction thymidine + ATP = dTMP + ADP + H(+). This chain is Thymidine kinase, found in Staphylococcus aureus (strain Mu50 / ATCC 700699).